Reading from the N-terminus, the 210-residue chain is Chaperone protein TorD (210 aa).

Belongs to the TorD/DmsD family. TorD subfamily.

It is found in the cytoplasm. Functionally, involved in the biogenesis of TorA. Acts on TorA before the insertion of the molybdenum cofactor and, as a result, probably favors a conformation of the apoenzyme that is competent for acquiring the cofactor. In Salmonella paratyphi B (strain ATCC BAA-1250 / SPB7), this protein is Chaperone protein TorD.